The sequence spans 380 residues: Elongation factor Ts, mitochondrial (380 aa).

This sequence belongs to the EF-Ts family.

It localises to the mitochondrion. Its function is as follows. Associates with the EF-Tu.GDP complex and induces the exchange of GDP to GTP. It remains bound to the aminoacyl-tRNA.EF-Tu.GTP complex up to the GTP hydrolysis stage on the ribosome. The polypeptide is Elongation factor Ts, mitochondrial (Plasmodium chabaudi chabaudi).